The sequence spans 153 residues: Ribonuclease K6 (153 aa).

Residues 1–27 form the signal peptide; that stretch reads MVVDLPRYLPLLLLLELWEPMYLLCSQ. Histidine 41 functions as the Proton acceptor in the catalytic mechanism. Intrachain disulfides connect cysteine 49–cysteine 107, cysteine 63–cysteine 117, cysteine 81–cysteine 132, and cysteine 88–cysteine 95. Asparagine 58 carries N-linked (GlcNAc...) asparagine glycosylation. 64–68 is a binding site for substrate; it reads KQINT. Residue asparagine 85 is glycosylated (N-linked (GlcNAc...) asparagine). Substrate is bound at residue lysine 89. The active-site Proton donor is histidine 148.

The protein belongs to the pancreatic ribonuclease family. Interacts (via N-terminus) with bacterial lipopolysaccharide (LPS). As to expression, highly expressed in spleen (at protein level). Has little or no expression in healthy kidneys (at protein level). Detected at high levels in infected kidneys (at protein level). Expressed at low levels in bladder. Also detected in skeletal muscle, heart and bone marrow.

It is found in the secreted. The protein resides in the lysosome. The protein localises to the cytoplasmic granule. In terms of biological role, ribonuclease which shows a preference for the pyrimidines uridine and cytosine. Has potent antibacterial activity against a range of Gram-positive and Gram-negative bacteria, including P.aeruginosa, A.baumanii, M.luteus, S.aureus, E.faecalis, E.faecium, S.saprophyticus and E.coli. Causes loss of bacterial membrane integrity, and also promotes agglutination of Gram-negative bacteria. Probably contributes to urinary tract sterility. Bactericidal activity is independent of RNase activity. In Mus musculus (Mouse), this protein is Ribonuclease K6 (Rnase6).